The chain runs to 262 residues: Nurim (262 aa).

Over 1–4 (MAPA) the chain is Nuclear. The helical transmembrane segment at 5 to 28 (LLLVPAALASFVLAFGTGVEFVRF) threads the bilayer. Residues 29-58 (TSLRPLLGGIPESGGPDARHGWLAALQDRS) are Perinuclear space-facing. Residues 59–80 (ILASLAWDLCLLLLFVVQHSLM) traverse the membrane as a helical segment. Over 81-97 (ATEAVKAWTSRYFGVLQ) the chain is Nuclear. The helical transmembrane segment at 98–114 (RSLYVACTALALQLVMR) threads the bilayer. The Perinuclear space segment spans residues 115-133 (YWEATPRGPVLWEARAEPW). A helical transmembrane segment spans residues 134-164 (ATWVPLLCFVLHVVSWLLIFSILLVFDYAEL). Topologically, residues 165–191 (MGLKQVYYHVLGLGEPLSLKSPRALRL) are nuclear. Residues 192-210 (FSHLRHPVCVELLTVLWVV) traverse the membrane as a helical segment. Residues 211–216 (PTLGTD) lie on the Perinuclear space side of the membrane. A helical membrane pass occupies residues 217–234 (RLLLALLFTLYLGLAHGL). At 235–262 (DQQDLRYLRSQLQRKLQLLSRPQDGEAE) the chain is on the nuclear side.

Belongs to the nurim family.

Its subcellular location is the nucleus inner membrane. The sequence is that of Nurim (Nrm) from Rattus norvegicus (Rat).